A 341-amino-acid chain; its full sequence is S-adenosylmethionine:tRNA ribosyltransferase-isomerase (341 aa).

This sequence belongs to the QueA family. Monomer.

It localises to the cytoplasm. The enzyme catalyses 7-aminomethyl-7-carbaguanosine(34) in tRNA + S-adenosyl-L-methionine = epoxyqueuosine(34) in tRNA + adenine + L-methionine + 2 H(+). It participates in tRNA modification; tRNA-queuosine biosynthesis. Functionally, transfers and isomerizes the ribose moiety from AdoMet to the 7-aminomethyl group of 7-deazaguanine (preQ1-tRNA) to give epoxyqueuosine (oQ-tRNA). This Pelotomaculum thermopropionicum (strain DSM 13744 / JCM 10971 / SI) protein is S-adenosylmethionine:tRNA ribosyltransferase-isomerase.